The chain runs to 619 residues: Pentatricopeptide repeat-containing protein At3g22470, mitochondrial (619 aa).

The transit peptide at 1-28 directs the protein to the mitochondrion; the sequence is MIQRLIPLNRKASNFTQILEKGTSLLHY. 15 PPR repeats span residues 69–103, 104–138, 139–173, 174–208, 209–243, 244–278, 279–313, 314–348, 349–383, 384–418, 419–453, 454–488, 489–523, 524–558, and 559–593; these read TPID…GIEH, DMYT…GYEP, DTIT…KQRP, DLVT…GFQP, DEVT…NIKA, SVVQ…GIKA, DVVT…NIIP, DVVT…GIAP, DTIT…GCEP, DIVT…GLIP, NTIT…GVPP, SVVT…RMTL, GIGI…GVKP, DVVT…GCTP, and DDFT…GFSA.

It belongs to the PPR family. P subfamily.

Its subcellular location is the mitochondrion. The protein is Pentatricopeptide repeat-containing protein At3g22470, mitochondrial of Arabidopsis thaliana (Mouse-ear cress).